The chain runs to 544 residues: Chitin-inducible gibberellin-responsive protein 2 (544 aa).

Residues 1-123 (MADTPTSRMI…VGASCVTEDP (123 aa)) form a disordered region. Polar residues-rich tracts occupy residues 15–30 (NIPSQNLKQFQYSDNP), 63–74 (SQATPNKYTLDS), and 86–101 (PSSQSFTTRSGSPLSQ). The GRAS domain occupies 165 to 544 (RMMGIPRGNL…RPLVVSSAWH (380 aa)). The segment at 172-232 (GNLKELLIAC…VARLASSGIS (61 aa)) is leucine repeat I (LRI). The segment at 251–316 (MHFLYEACPY…GGPPTVRITG (66 aa)) is VHIID. Residues 282–286 (IHIID) carry the VHIID motif. The segment at 332-364 (LVGRRLSHIASLCKVPFEFHPLAISGSKVEAAH) is leucine repeat II (LRII). The segment at 373-467 (LAVNFTLELH…QHCLAREIVN (95 aa)) is PFYRE. The segment at 470–544 (ACEGEERAER…RPLVVSSAWH (75 aa)) is SAW.

This sequence belongs to the GRAS family.

The protein resides in the nucleus. In terms of biological role, may play a regulatory role in the early step of oligosaccharide elicitor response, downstream of the membrane-associated high-affinity chitin-binding protein. The protein is Chitin-inducible gibberellin-responsive protein 2 (CIGR2) of Oryza sativa subsp. japonica (Rice).